A 311-amino-acid chain; its full sequence is Regulator of rDNA transcription protein 6 (311 aa).

Transmembrane regions (helical) follow at residues 32–52 (PHLL…SAEL) and 271–291 (YLIV…IIVT).

The protein resides in the membrane. In terms of biological role, may be involved in the modulation of rDNA transcription. The chain is Regulator of rDNA transcription protein 6 (RRT6) from Saccharomyces cerevisiae (strain ATCC 204508 / S288c) (Baker's yeast).